Here is a 577-residue protein sequence, read N- to C-terminus: Proline--tRNA ligase (577 aa).

It belongs to the class-II aminoacyl-tRNA synthetase family. ProS type 1 subfamily. As to quaternary structure, homodimer.

Its subcellular location is the cytoplasm. The catalysed reaction is tRNA(Pro) + L-proline + ATP = L-prolyl-tRNA(Pro) + AMP + diphosphate. In terms of biological role, catalyzes the attachment of proline to tRNA(Pro) in a two-step reaction: proline is first activated by ATP to form Pro-AMP and then transferred to the acceptor end of tRNA(Pro). As ProRS can inadvertently accommodate and process non-cognate amino acids such as alanine and cysteine, to avoid such errors it has two additional distinct editing activities against alanine. One activity is designated as 'pretransfer' editing and involves the tRNA(Pro)-independent hydrolysis of activated Ala-AMP. The other activity is designated 'posttransfer' editing and involves deacylation of mischarged Ala-tRNA(Pro). The misacylated Cys-tRNA(Pro) is not edited by ProRS. This is Proline--tRNA ligase from Limosilactobacillus reuteri (strain DSM 20016) (Lactobacillus reuteri).